Here is a 257-residue protein sequence, read N- to C-terminus: UPF0246 protein Mpe_A2092 (257 aa).

The protein belongs to the UPF0246 family.

This is UPF0246 protein Mpe_A2092 from Methylibium petroleiphilum (strain ATCC BAA-1232 / LMG 22953 / PM1).